A 144-amino-acid polypeptide reads, in one-letter code: Ferredoxin-thioredoxin reductase catalytic chain, chloroplastic (144 aa).

A chloroplast-targeting transit peptide spans 1–31 (MKALQASIAYSFPISSPAASPRRFSRVIRAQ). Cysteine 83 contacts [4Fe-4S] cluster. Cysteine 85 serves as the catalytic Nucleophile. Cysteine 85 and cysteine 115 are joined by a disulfide. Residues cysteine 102, cysteine 104, and cysteine 113 each coordinate [4Fe-4S] cluster.

It belongs to the ferredoxin thioredoxin reductase beta subunit family. As to quaternary structure, heterodimer of subunit A (variable subunit) and subunit B (catalytic subunit). Heterodimeric FTR forms a complex with ferredoxin and thioredoxin. It depends on [4Fe-4S] cluster as a cofactor.

The protein resides in the plastid. It is found in the chloroplast. It catalyses the reaction [thioredoxin]-disulfide + 2 reduced [2Fe-2S]-[ferredoxin] + 2 H(+) = [thioredoxin]-dithiol + 2 oxidized [2Fe-2S]-[ferredoxin]. Functionally, catalytic subunit of the ferredoxin-thioredoxin reductase (FTR), which catalyzes the two-electron reduction of thioredoxins by the electrons provided by reduced ferredoxin. The chain is Ferredoxin-thioredoxin reductase catalytic chain, chloroplastic (FTRC) from Spinacia oleracea (Spinach).